The primary structure comprises 309 residues: Protein FdhE homolog (309 aa).

Belongs to the FdhE family.

The protein localises to the cytoplasm. Necessary for formate dehydrogenase activity. The sequence is that of Protein FdhE homolog from Yersinia pestis bv. Antiqua (strain Antiqua).